A 161-amino-acid polypeptide reads, in one-letter code: Disulfide bond formation protein B (161 aa).

Residues 1 to 8 (MQANSRAY) are Cytoplasmic-facing. A helical membrane pass occupies residues 9–25 (FLLIAFISFGLVGFALY). Residues 26 to 43 (LQFEKGYQPCPLCIMQRF) lie on the Periplasmic side of the membrane. Cysteines 35 and 38 form a disulfide. The helical transmembrane segment at 44–58 (AFIGIGLFSLLAVIA) threads the bilayer. Over 59-63 (QNTRS) the chain is Cytoplasmic. The chain crosses the membrane as a helical span at residues 64 to 81 (LWQGLGMLSGVGGIAVAV). At 82–136 (YHVSLLLNPKASCGIDPLENWVNALPTAKVLPQVFYSDGLCTAPLPPVLGLSVPA) the chain is on the periplasmic side. A disulfide bond links Cys94 and Cys122. Residues 137–155 (WSLIWLFILTLTLAVGLIR) traverse the membrane as a helical segment. Residues 156–161 (REKNFR) lie on the Cytoplasmic side of the membrane.

This sequence belongs to the DsbB family.

It localises to the cell inner membrane. Functionally, required for disulfide bond formation in some periplasmic proteins. Acts by oxidizing the DsbA protein. This chain is Disulfide bond formation protein B, found in Cupriavidus pinatubonensis (strain JMP 134 / LMG 1197) (Cupriavidus necator (strain JMP 134)).